The following is a 346-amino-acid chain: Protease inhibitor Egf1.5b (346 aa).

A signal peptide spans 1–28; sequence MYIDTGIMSNNIFLFAFFALVGLTRIEA. The 53-residue stretch at 52–104 folds into the TIL domain; the sequence is CRENEHYNSTRIECEDECNDRNNKLCYRFQQFCWCNEGYIRNSSHICVKLEDC.

The protein belongs to the polydnaviridae EGF-like motif protein family. As to quaternary structure, interacts with host PAP1, PAP3 and SPH2.

Its function is as follows. Counteracts the host humoral immune response by inhibiting the processing and the amidolytic activity of host PAP1 and PAP3. Thereby, melanization of host hemolymph, normally producing several reactive intermediates toxic for viruses, is deregulated and proper immune response cannot occur. This chain is Protease inhibitor Egf1.5b (O5), found in Microplitis demolitor (Parasitoid wasp).